Consider the following 264-residue polypeptide: Thymidylate synthase (264 aa).

Position 21 (R21) interacts with dUMP. Position 51 (H51) interacts with (6R)-5,10-methylene-5,6,7,8-tetrahydrofolate. 126–127 contributes to the dUMP binding site; the sequence is RR. The active-site Nucleophile is C146. DUMP contacts are provided by residues 166-169, N177, and 207-209; these read RSAD and HLY. D169 is a binding site for (6R)-5,10-methylene-5,6,7,8-tetrahydrofolate. A263 lines the (6R)-5,10-methylene-5,6,7,8-tetrahydrofolate pocket.

Belongs to the thymidylate synthase family. Bacterial-type ThyA subfamily. In terms of assembly, homodimer.

It is found in the cytoplasm. The catalysed reaction is dUMP + (6R)-5,10-methylene-5,6,7,8-tetrahydrofolate = 7,8-dihydrofolate + dTMP. The protein operates within pyrimidine metabolism; dTTP biosynthesis. In terms of biological role, catalyzes the reductive methylation of 2'-deoxyuridine-5'-monophosphate (dUMP) to 2'-deoxythymidine-5'-monophosphate (dTMP) while utilizing 5,10-methylenetetrahydrofolate (mTHF) as the methyl donor and reductant in the reaction, yielding dihydrofolate (DHF) as a by-product. This enzymatic reaction provides an intracellular de novo source of dTMP, an essential precursor for DNA biosynthesis. The polypeptide is Thymidylate synthase (Bdellovibrio bacteriovorus (strain ATCC 15356 / DSM 50701 / NCIMB 9529 / HD100)).